The sequence spans 449 residues: 23S rRNA (uracil(1939)-C(5))-methyltransferase RlmD (449 aa).

The TRAM domain maps to 15-73; that stretch reads KAIPAKNLTVTVTSLDPFGQGVARHEGKTVFVTGVLPGEQAEVQLTEDKRQFSHAKLKR. 4 residues coordinate [4Fe-4S] cluster: Cys-86, Cys-92, Cys-95, and Cys-173. Residues Gln-276, Phe-305, Asn-310, Glu-326, Asn-353, and Asp-374 each contribute to the S-adenosyl-L-methionine site. The active-site Nucleophile is Cys-400.

It belongs to the class I-like SAM-binding methyltransferase superfamily. RNA M5U methyltransferase family. RlmD subfamily.

The enzyme catalyses uridine(1939) in 23S rRNA + S-adenosyl-L-methionine = 5-methyluridine(1939) in 23S rRNA + S-adenosyl-L-homocysteine + H(+). Catalyzes the formation of 5-methyl-uridine at position 1939 (m5U1939) in 23S rRNA. This is 23S rRNA (uracil(1939)-C(5))-methyltransferase RlmD from Pectobacterium carotovorum subsp. carotovorum (strain PC1).